We begin with the raw amino-acid sequence, 183 residues long: Probable chemoreceptor glutamine deamidase CheD (183 aa).

The protein belongs to the CheD family.

The enzyme catalyses L-glutaminyl-[protein] + H2O = L-glutamyl-[protein] + NH4(+). Its function is as follows. Probably deamidates glutamine residues to glutamate on methyl-accepting chemotaxis receptors (MCPs), playing an important role in chemotaxis. The polypeptide is Probable chemoreceptor glutamine deamidase CheD (Rhizobium meliloti (strain 1021) (Ensifer meliloti)).